A 238-amino-acid polypeptide reads, in one-letter code: Ribonuclease PH (238 aa).

Phosphate contacts are provided by residues Arg86 and 124–126; that span reads GTR.

Belongs to the RNase PH family. As to quaternary structure, homohexameric ring arranged as a trimer of dimers.

The catalysed reaction is tRNA(n+1) + phosphate = tRNA(n) + a ribonucleoside 5'-diphosphate. Functionally, phosphorolytic 3'-5' exoribonuclease that plays an important role in tRNA 3'-end maturation. Removes nucleotide residues following the 3'-CCA terminus of tRNAs; can also add nucleotides to the ends of RNA molecules by using nucleoside diphosphates as substrates, but this may not be physiologically important. Probably plays a role in initiation of 16S rRNA degradation (leading to ribosome degradation) during starvation. This is Ribonuclease PH from Aliivibrio salmonicida (strain LFI1238) (Vibrio salmonicida (strain LFI1238)).